We begin with the raw amino-acid sequence, 128 residues long: uncharacterized protein (128 aa).

It localises to the mitochondrion. This is an uncharacterized protein from Saccharomyces cerevisiae (strain ATCC 204508 / S288c) (Baker's yeast).